A 265-amino-acid polypeptide reads, in one-letter code: Gap junction beta-4 protein (265 aa).

An intramembrane segment occupies 2–13; sequence NWGFLQGILSGV. The Cytoplasmic segment spans residues 14–20; the sequence is NKYSTAL. The helical transmembrane segment at 21-40 threads the bilayer; the sequence is GRIWLSVVFIFRVLVYVVAA. Topologically, residues 41 to 73 are extracellular; it reads EEVWDDEQKDFICNTKQPGCPNVCYDEFFPVSH. Cystine bridges form between Cys-53–Cys-175, Cys-60–Cys-169, and Cys-64–Cys-164. A helical membrane pass occupies residues 74-94; sequence VRLWALQLILVTCPSLLVVMH. The Cytoplasmic segment spans residues 95–130; the sequence is VAYREERERKHRLKHGPDAPALYSNLSKKRGGLWWT. Residues 131–151 form a helical membrane-spanning segment; that stretch reads YLLSLIFKAAVDSGFLYIFHC. Over 152-184 the chain is Extracellular; that stretch reads IYKDYDMPRVVACSVQPCPHTVDCYISRPTEKK. Residues 185–205 traverse the membrane as a helical segment; the sequence is VFTYFMVVTAAICILLNLSEV. Residues 206 to 265 lie on the Cytoplasmic side of the membrane; the sequence is AYLVGKRCMEVFRPRRQKTSRRHQLPDTCPPYVISKGHPQDESTVLTKAGMATVDAGVYP.

Belongs to the connexin family. Beta-type (group I) subfamily. A hemichannel or connexon is composed of a hexamer of connexins. A functional gap junction is formed by the apposition of two hemichannels. Forms heteromeric channels with GJB2. Detected in adult heart, kidney, skin and cochlea, where it is detected in spiral ganglion, stria vascularis, spiral limbus and spiral ligament (at protein level).

It is found in the cell membrane. Its subcellular location is the cell junction. It localises to the gap junction. Structural component of gap junctions. Gap junctions are dodecameric channels that connect the cytoplasm of adjoining cells. They are formed by the docking of two hexameric hemichannels, one from each cell membrane. Small molecules and ions diffuse from one cell to a neighboring cell via the central pore. This is Gap junction beta-4 protein (Gjb4) from Rattus norvegicus (Rat).